A 715-amino-acid chain; its full sequence is DNA-directed RNA polymerase subunit beta' (715 aa).

Residues Cys69, Cys71, Cys87, and Cys90 each contribute to the Zn(2+) site. A disordered region spans residues 244-272 (APESQSEVIEAQGPVPQAEEEKQRDQSIQ). Asp520, Asp522, and Asp524 together coordinate Mg(2+).

It belongs to the RNA polymerase beta' chain family. RpoC1 subfamily. In plastids the minimal PEP RNA polymerase catalytic core is composed of four subunits: alpha, beta, beta', and beta''. When a (nuclear-encoded) sigma factor is associated with the core the holoenzyme is formed, which can initiate transcription. It depends on Mg(2+) as a cofactor. Zn(2+) serves as cofactor.

It localises to the plastid. The protein resides in the chloroplast. The enzyme catalyses RNA(n) + a ribonucleoside 5'-triphosphate = RNA(n+1) + diphosphate. DNA-dependent RNA polymerase catalyzes the transcription of DNA into RNA using the four ribonucleoside triphosphates as substrates. This is DNA-directed RNA polymerase subunit beta' from Zygnema circumcarinatum (Green alga).